The primary structure comprises 209 residues: rRNA N(6)-adenosine-methyltransferase METTL5 (209 aa).

S-adenosyl-L-methionine contacts are provided by residues glutamine 28, threonine 31, glycine 59, cysteine 62, valine 64, aspartate 81, and 108 to 109 (DV).

The protein belongs to the methyltransferase superfamily. PrmA family. Heterodimer; heterodimerizes with TRMT112. In terms of tissue distribution, ubiquitously expressed in brain.

The protein resides in the nucleus. It is found in the presynapse. It localises to the postsynapse. The enzyme catalyses adenosine(1832) in 18S rRNA + S-adenosyl-L-methionine = N(6)-methyladenosine(1832) in 18S rRNA + S-adenosyl-L-homocysteine + H(+). With respect to regulation, rRNA N6-adenosine-methyltransferase activity is inhibited by zinc. Catalytic subunit of a heterodimer with TRMT112, which specifically methylates the 6th position of adenine in position 1832 of 18S rRNA. N6-methylation of adenine(1832) in 18S rRNA resides in the decoding center of 18S rRNA and is required for translation and embryonic stem cells (ESCs) pluripotency and differentiation. In Mus musculus (Mouse), this protein is rRNA N(6)-adenosine-methyltransferase METTL5.